Here is an 829-residue protein sequence, read N- to C-terminus: DNA ligase (829 aa).

NAD(+)-binding positions include 38–42 (DAEYD), 87–88 (SL), and Glu127. The active-site N6-AMP-lysine intermediate is the Lys129. 4 residues coordinate NAD(+): Arg150, Glu187, Lys305, and Lys329. Residues Cys455, Cys458, Cys473, and Cys479 each contribute to the Zn(2+) site. The segment at 534 to 564 (ETADKGSSENENGDAETVSGDLSKYNTQNGK) is disordered. Residues 752-829 (GINKAVAGKT…SEAELLTLLC (78 aa)) enclose the BRCT domain.

This sequence belongs to the NAD-dependent DNA ligase family. LigA subfamily. It depends on Mg(2+) as a cofactor. Mn(2+) serves as cofactor.

It carries out the reaction NAD(+) + (deoxyribonucleotide)n-3'-hydroxyl + 5'-phospho-(deoxyribonucleotide)m = (deoxyribonucleotide)n+m + AMP + beta-nicotinamide D-nucleotide.. DNA ligase that catalyzes the formation of phosphodiester linkages between 5'-phosphoryl and 3'-hydroxyl groups in double-stranded DNA using NAD as a coenzyme and as the energy source for the reaction. It is essential for DNA replication and repair of damaged DNA. The chain is DNA ligase from Neisseria gonorrhoeae (strain ATCC 700825 / FA 1090).